The following is a 373-amino-acid chain: Carbamoyl phosphate synthase small chain (373 aa).

The tract at residues 1 to 179 is CPSase; the sequence is MSGKAQLVLE…AYIVEPEGPP (179 aa). Positions 47, 230, and 232 each coordinate L-glutamine. The Glutamine amidotransferase type-1 domain occupies 182–373; sequence TVAALDLGIK…QFIELMEGDR (192 aa). Catalysis depends on Cys258, which acts as the Nucleophile. Phe259, Gln262, Asn300, Gly302, and Phe303 together coordinate L-glutamine. Active-site residues include His348 and Glu350.

It belongs to the CarA family. In terms of assembly, composed of two chains; the small (or glutamine) chain promotes the hydrolysis of glutamine to ammonia, which is used by the large (or ammonia) chain to synthesize carbamoyl phosphate. Tetramer of heterodimers (alpha,beta)4.

It catalyses the reaction hydrogencarbonate + L-glutamine + 2 ATP + H2O = carbamoyl phosphate + L-glutamate + 2 ADP + phosphate + 2 H(+). The catalysed reaction is L-glutamine + H2O = L-glutamate + NH4(+). It participates in amino-acid biosynthesis; L-arginine biosynthesis; carbamoyl phosphate from bicarbonate: step 1/1. It functions in the pathway pyrimidine metabolism; UMP biosynthesis via de novo pathway; (S)-dihydroorotate from bicarbonate: step 1/3. Small subunit of the glutamine-dependent carbamoyl phosphate synthetase (CPSase). CPSase catalyzes the formation of carbamoyl phosphate from the ammonia moiety of glutamine, carbonate, and phosphate donated by ATP, constituting the first step of 2 biosynthetic pathways, one leading to arginine and/or urea and the other to pyrimidine nucleotides. The small subunit (glutamine amidotransferase) binds and cleaves glutamine to supply the large subunit with the substrate ammonia. This chain is Carbamoyl phosphate synthase small chain, found in Mycolicibacterium paratuberculosis (strain ATCC BAA-968 / K-10) (Mycobacterium paratuberculosis).